A 301-amino-acid polypeptide reads, in one-letter code: GTPase Era (301 aa).

The Era-type G domain occupies 7–175 (YCGFIAIVGR…AAIVRKHLPE (169 aa)). Positions 15–22 (GRPNVGKS) are G1. Residue 15 to 22 (GRPNVGKS) coordinates GTP. The tract at residues 41 to 45 (QTTRH) is G2. Residues 62–65 (DTPG) are G3. GTP is bound by residues 62 to 66 (DTPGL) and 124 to 127 (NKVD). The segment at 124–127 (NKVD) is G4. Residues 154 to 156 (ISA) are G5. In terms of domain architecture, KH type-2 spans 206–283 (LGAELPYSVT…HLELWVKVKS (78 aa)).

Belongs to the TRAFAC class TrmE-Era-EngA-EngB-Septin-like GTPase superfamily. Era GTPase family. In terms of assembly, monomer.

It is found in the cytoplasm. Its subcellular location is the cell inner membrane. In terms of biological role, an essential GTPase that binds both GDP and GTP, with rapid nucleotide exchange. Plays a role in 16S rRNA processing and 30S ribosomal subunit biogenesis and possibly also in cell cycle regulation and energy metabolism. This Escherichia coli O157:H7 protein is GTPase Era.